The primary structure comprises 123 residues: Large ribosomal subunit protein uL14 (123 aa).

Belongs to the universal ribosomal protein uL14 family. As to quaternary structure, part of the 50S ribosomal subunit. Forms a cluster with proteins L3 and L19. In the 70S ribosome, L14 and L19 interact and together make contacts with the 16S rRNA in bridges B5 and B8.

Its function is as follows. Binds to 23S rRNA. Forms part of two intersubunit bridges in the 70S ribosome. This chain is Large ribosomal subunit protein uL14, found in Histophilus somni (strain 129Pt) (Haemophilus somnus).